A 166-amino-acid polypeptide reads, in one-letter code: uncharacterized protein (166 aa).

The next 3 membrane-spanning stretches (helical) occupy residues 4–24 (LNIF…EASI), 101–121 (LITC…SEAI), and 146–166 (SWSS…QCFL).

The protein resides in the membrane. This is an uncharacterized protein from Saccharomyces cerevisiae (strain ATCC 204508 / S288c) (Baker's yeast).